The primary structure comprises 550 residues: Cytokinin dehydrogenase 10 (550 aa).

The signal sequence occupies residues 1–26; that stretch reads MMPRAQLTTFLIVTSFLSTVPYLRAP. The region spanning 64–245 is the FAD-binding PCMH-type domain; it reads VHATPNGVFR…TRARIRLEPA (182 aa). FAD-binding residues include Gly100, Lys101, and Gly102. His103 is subject to Pros-8alpha-FAD histidine. Positions 104, 108, 169, 174, 180, 184, and 235 each coordinate FAD. Residue Asn289 is glycosylated (N-linked (GlcNAc...) asparagine). The FAD site is built by Tyr489, Ser524, and Gln527. The tract at residues 523–550 is disordered; that stretch reads LSPGQGIFPPPPPPSPPPPAAGEPITAS. Pro residues predominate over residues 530-543; it reads FPPPPPPSPPPPAA.

Belongs to the oxygen-dependent FAD-linked oxidoreductase family. In terms of assembly, monomer. The cofactor is FAD.

The protein resides in the secreted. Its subcellular location is the extracellular space. The enzyme catalyses N(6)-dimethylallyladenine + A + H2O = 3-methyl-2-butenal + adenine + AH2. Its function is as follows. Catalyzes the oxidation of cytokinins, a family of N(6)-substituted adenine derivatives that are plant hormones, where the substituent is an isopentenyl group. The protein is Cytokinin dehydrogenase 10 (CKX10) of Oryza sativa subsp. japonica (Rice).